Reading from the N-terminus, the 408-residue chain is CinA-like protein (408 aa).

This sequence belongs to the CinA family.

This is CinA-like protein from Fervidobacterium nodosum (strain ATCC 35602 / DSM 5306 / Rt17-B1).